Consider the following 160-residue polypeptide: uncharacterized protein (160 aa).

A helical membrane pass occupies residues 47–67 (LLGGFANVAAILTPLVAVLAY).

Its subcellular location is the membrane. This is an uncharacterized protein from Sinorhizobium fredii (strain NBRC 101917 / NGR234).